The following is a 403-amino-acid chain: Argininosuccinate synthase (403 aa).

Residues 13 to 21 (AYSGGLDTS) and Ala-40 each bind ATP. The L-citrulline site is built by Tyr-91 and Ser-96. Position 121 (Gly-121) interacts with ATP. Positions 123, 127, and 128 each coordinate L-aspartate. An L-citrulline-binding site is contributed by Asn-127. L-citrulline-binding residues include Arg-131, Ser-180, Ser-189, Glu-265, and Tyr-277.

Belongs to the argininosuccinate synthase family. Type 1 subfamily. As to quaternary structure, homotetramer.

It is found in the cytoplasm. It catalyses the reaction L-citrulline + L-aspartate + ATP = 2-(N(omega)-L-arginino)succinate + AMP + diphosphate + H(+). The protein operates within amino-acid biosynthesis; L-arginine biosynthesis; L-arginine from L-ornithine and carbamoyl phosphate: step 2/3. In Leptospira interrogans serogroup Icterohaemorrhagiae serovar copenhageni (strain Fiocruz L1-130), this protein is Argininosuccinate synthase.